Here is a 1755-residue protein sequence, read N- to C-terminus: Transposon Ty1-BL Gag-Pol polyprotein (1755 aa).

Composition is skewed to polar residues over residues 20–31, 46–55, and 137–168; these read SVTSKEVQTTQD, VSTQANSQQP, and VGTH…TNQH. Disordered stretches follow at residues 20 to 84, 137 to 173, and 350 to 420; these read SVTS…QNGP, VGTH…RPPP, and QQES…IRGS. An RNA-binding region spans residues 299–401; it reads NNGIPINNKV…NSQSRTARAH (103 aa). The span at 363-372 shows a compositional bias: basic and acidic residues; that stretch reads SPSDEKKDSR. Positions 373 to 411 are enriched in polar residues; it reads TYTNTTKPKSITRNSQKPNNSQSRTARAHNVSTFNNSPG. Asp-461 (for protease activity; shared with dimeric partner) is an active-site residue. Residues 583–640 form an integrase-type zinc finger-like region; sequence NVHTSESTRKYPYPFIHRMLAHANAQTIRYSLKNNTITYFNESDVDWSSAIDYQCPDC. Residues 660 to 835 form the Integrase catalytic domain; it reads NSYEPFQYLH…AGLDISTLLP (176 aa). Residues Asp-671 and Asp-736 each contribute to the Mg(2+) site. The segment at 956-1172 is disordered; that stretch reads SKAVSPTDST…LGGIGDSNAY (217 aa). Positions 960-969 are enriched in low complexity; it reads SPTDSTPPST. 2 stretches are compositionally biased toward polar residues: residues 1005–1017 and 1031–1043; these read STPQ…STDS and MSQS…SYAS. Positions 1044–1053 are enriched in basic and acidic residues; the sequence is KSKDFRHSDS. Composition is skewed to polar residues over residues 1054 to 1082 and 1095 to 1106; these read YSDN…QTSE and SIDTSSSESNSL. The Bipartite nuclear localization signal signature appears at 1178–1212; the sequence is KKRSLEDNETEIKVSRDTWNTKNMRSLEPPRSKKR. Positions 1338 to 1476 constitute a Reverse transcriptase Ty1/copia-type domain; sequence NNYHITQLDI…DILGLEIKYQ (139 aa). Asp-1346, Asp-1427, Asp-1428, Asp-1610, Glu-1652, and Asp-1685 together coordinate Mg(2+). The region spanning 1610–1752 is the RNase H Ty1/copia-type domain; the sequence is DASYGNQPYY…IKTFKLLTNK (143 aa).

In terms of assembly, the capsid protein forms a homotrimer, from which the VLPs are assembled. The protease is a homodimer, whose active site consists of two apposed aspartic acid residues. Initially, virus-like particles (VLPs) are composed of the structural unprocessed proteins Gag and Gag-Pol, and also contain the host initiator methionine tRNA (tRNA(i)-Met) which serves as a primer for minus-strand DNA synthesis, and a dimer of genomic Ty RNA. Processing of the polyproteins occurs within the particle and proceeds by an ordered pathway, called maturation. First, the protease (PR) is released by autocatalytic cleavage of the Gag-Pol polyprotein yielding capsid protein p45 and a Pol-p154 precursor protein. This cleavage is a prerequisite for subsequent processing of Pol-p154 at the remaining sites to release the mature structural and catalytic proteins. Maturation takes place prior to the RT reaction and is required to produce transposition-competent VLPs.

The protein localises to the cytoplasm. It is found in the nucleus. The enzyme catalyses DNA(n) + a 2'-deoxyribonucleoside 5'-triphosphate = DNA(n+1) + diphosphate. The catalysed reaction is Endonucleolytic cleavage to 5'-phosphomonoester.. Functionally, capsid protein (CA) is the structural component of the virus-like particle (VLP), forming the shell that encapsulates the retrotransposons dimeric RNA genome. The particles are assembled from trimer-clustered units and there are holes in the capsid shells that allow for the diffusion of macromolecules. CA also has nucleocapsid-like chaperone activity, promoting primer tRNA(i)-Met annealing to the multipartite primer-binding site (PBS), dimerization of Ty1 RNA and initiation of reverse transcription. In terms of biological role, the aspartyl protease (PR) mediates the proteolytic cleavages of the Gag and Gag-Pol polyproteins after assembly of the VLP. Its function is as follows. Reverse transcriptase/ribonuclease H (RT) is a multifunctional enzyme that catalyzes the conversion of the retro-elements RNA genome into dsDNA within the VLP. The enzyme displays a DNA polymerase activity that can copy either DNA or RNA templates, and a ribonuclease H (RNase H) activity that cleaves the RNA strand of RNA-DNA heteroduplexes during plus-strand synthesis and hydrolyzes RNA primers. The conversion leads to a linear dsDNA copy of the retrotransposon that includes long terminal repeats (LTRs) at both ends. Integrase (IN) targets the VLP to the nucleus, where a subparticle preintegration complex (PIC) containing at least integrase and the newly synthesized dsDNA copy of the retrotransposon must transit the nuclear membrane. Once in the nucleus, integrase performs the integration of the dsDNA into the host genome. This is Transposon Ty1-BL Gag-Pol polyprotein (TY1B-BL) from Saccharomyces cerevisiae (strain ATCC 204508 / S288c) (Baker's yeast).